A 394-amino-acid polypeptide reads, in one-letter code: Chaperone protein DnaJ (394 aa).

Residues 4-68 (DYYEILGVSR…ELKARYDRFG (65 aa)) enclose the J domain. The segment at 136-218 (GGEKQIRISH…CNGEGLAQTT (83 aa)) adopts a CR-type zinc-finger fold. Zn(2+) is bound by residues Cys-149, Cys-152, Cys-166, Cys-169, Cys-192, Cys-195, Cys-206, and Cys-209. CXXCXGXG motif repeat units follow at residues 149–156 (CNVCGGSG), 166–173 (CPTCGGSG), 192–199 (CPTCGGSG), and 206–213 (CYNCNGEG).

Belongs to the DnaJ family. Homodimer. The cofactor is Zn(2+).

Its subcellular location is the cytoplasm. Participates actively in the response to hyperosmotic and heat shock by preventing the aggregation of stress-denatured proteins and by disaggregating proteins, also in an autonomous, DnaK-independent fashion. Unfolded proteins bind initially to DnaJ; upon interaction with the DnaJ-bound protein, DnaK hydrolyzes its bound ATP, resulting in the formation of a stable complex. GrpE releases ADP from DnaK; ATP binding to DnaK triggers the release of the substrate protein, thus completing the reaction cycle. Several rounds of ATP-dependent interactions between DnaJ, DnaK and GrpE are required for fully efficient folding. Also involved, together with DnaK and GrpE, in the DNA replication of plasmids through activation of initiation proteins. The sequence is that of Chaperone protein DnaJ from Synechococcus sp. (strain JA-2-3B'a(2-13)) (Cyanobacteria bacterium Yellowstone B-Prime).